A 103-amino-acid polypeptide reads, in one-letter code: Large ribosomal subunit protein bL21 (103 aa).

This sequence belongs to the bacterial ribosomal protein bL21 family. As to quaternary structure, part of the 50S ribosomal subunit. Contacts protein L20.

This protein binds to 23S rRNA in the presence of protein L20. This Lactobacillus johnsonii (strain CNCM I-12250 / La1 / NCC 533) protein is Large ribosomal subunit protein bL21.